Consider the following 479-residue polypeptide: tRNA-2-methylthio-N(6)-dimethylallyladenosine synthase (479 aa).

The region spanning 3–120 (KKLYIKTWGC…LPEMVNQVSE (118 aa)) is the MTTase N-terminal domain. Residues Cys-12, Cys-49, Cys-83, Cys-157, Cys-161, and Cys-164 each coordinate [4Fe-4S] cluster. Positions 143 to 375 (KADGASAFVS…QQRLNQQSMA (233 aa)) constitute a Radical SAM core domain. The TRAM domain maps to 378–441 (RRMLETEQRI…PNSLRGELIR (64 aa)).

It belongs to the methylthiotransferase family. MiaB subfamily. As to quaternary structure, monomer. It depends on [4Fe-4S] cluster as a cofactor.

The protein resides in the cytoplasm. The enzyme catalyses N(6)-dimethylallyladenosine(37) in tRNA + (sulfur carrier)-SH + AH2 + 2 S-adenosyl-L-methionine = 2-methylsulfanyl-N(6)-dimethylallyladenosine(37) in tRNA + (sulfur carrier)-H + 5'-deoxyadenosine + L-methionine + A + S-adenosyl-L-homocysteine + 2 H(+). Its function is as follows. Catalyzes the methylthiolation of N6-(dimethylallyl)adenosine (i(6)A), leading to the formation of 2-methylthio-N6-(dimethylallyl)adenosine (ms(2)i(6)A) at position 37 in tRNAs that read codons beginning with uridine. In Idiomarina loihiensis (strain ATCC BAA-735 / DSM 15497 / L2-TR), this protein is tRNA-2-methylthio-N(6)-dimethylallyladenosine synthase.